The chain runs to 91 residues: Sec-independent protein translocase protein TatA (91 aa).

The helical transmembrane segment at 3 to 23 (FFGIGLPEMLVILAIALLVFG) threads the bilayer. The tract at residues 57 to 91 (DRTPATPAEATVEPPVLDSAPTEAVTVEKQTETQV) is disordered. Positions 59-72 (TPATPAEATVEPPV) are enriched in low complexity.

The protein belongs to the TatA/E family. In terms of assembly, forms a complex with TatC.

It is found in the cell inner membrane. Functionally, part of the twin-arginine translocation (Tat) system that transports large folded proteins containing a characteristic twin-arginine motif in their signal peptide across membranes. TatA could form the protein-conducting channel of the Tat system. In Synechococcus elongatus (strain ATCC 33912 / PCC 7942 / FACHB-805) (Anacystis nidulans R2), this protein is Sec-independent protein translocase protein TatA.